Reading from the N-terminus, the 216-residue chain is Cytochrome c biogenesis ATP-binding export protein CcmA (216 aa).

Residues 11–216 (LSANELTCIR…RKITLDYRFV (206 aa)) form the ABC transporter domain. An ATP-binding site is contributed by 43–50 (GPNGAGKT).

Belongs to the ABC transporter superfamily. CcmA exporter (TC 3.A.1.107) family. As to quaternary structure, the complex is composed of two ATP-binding proteins (CcmA) and two transmembrane proteins (CcmB).

The protein localises to the cell inner membrane. The catalysed reaction is heme b(in) + ATP + H2O = heme b(out) + ADP + phosphate + H(+). Part of the ABC transporter complex CcmAB involved in the biogenesis of c-type cytochromes; once thought to export heme, this seems not to be the case, but its exact role is uncertain. Responsible for energy coupling to the transport system. The sequence is that of Cytochrome c biogenesis ATP-binding export protein CcmA from Shewanella frigidimarina (strain NCIMB 400).